The chain runs to 176 residues: Interleukin-7 (176 aa).

The first 25 residues, 1 to 25 (MFHVSFRYIFGIPPLILVLLPVASS), serve as a signal peptide directing secretion. 3 cysteine pairs are disulfide-bonded: cysteine 27–cysteine 165, cysteine 58–cysteine 153, and cysteine 71–cysteine 116. 3 N-linked (GlcNAc...) asparagine glycosylation sites follow: asparagine 94, asparagine 115, and asparagine 140.

It belongs to the IL-7/IL-9 family.

It localises to the secreted. Functionally, hematopoietic growth factor capable of stimulating the proliferation of lymphoid progenitors. It is important for proliferation during certain stages of B-cell maturation. The polypeptide is Interleukin-7 (IL7) (Sus scrofa (Pig)).